Reading from the N-terminus, the 179-residue chain is Large ribosomal subunit protein uL5 (179 aa).

Belongs to the universal ribosomal protein uL5 family. Part of the 50S ribosomal subunit; part of the 5S rRNA/L5/L18/L25 subcomplex. Contacts the 5S rRNA and the P site tRNA. Forms a bridge to the 30S subunit in the 70S ribosome.

In terms of biological role, this is one of the proteins that bind and probably mediate the attachment of the 5S RNA into the large ribosomal subunit, where it forms part of the central protuberance. In the 70S ribosome it contacts protein S13 of the 30S subunit (bridge B1b), connecting the 2 subunits; this bridge is implicated in subunit movement. Contacts the P site tRNA; the 5S rRNA and some of its associated proteins might help stabilize positioning of ribosome-bound tRNAs. The sequence is that of Large ribosomal subunit protein uL5 from Aeromonas salmonicida (strain A449).